Consider the following 1647-residue polypeptide: Maestro heat-like repeat-containing protein family member 1 (1647 aa).

HEAT repeat units follow at residues 9–47 (SPVL…RQPN), 65–103 (QTHR…SEMT), 224–262 (SEFY…ILSV), 351–389 (RGYS…RLDV), 597–635 (DVTL…TIKN), 968–1006 (FDSI…IGFM), 1131–1168 (SLAN…DKNL), 1364–1400 (KELI…AGVE), 1403–1441 (NRYA…VADE), 1490–1528 (YEQI…LMRS), and 1612–1647 (NINS…LHHY).

This sequence belongs to the MROH1 family. In terms of assembly, homooligomer.

It is found in the lysosome membrane. Its function is as follows. Lysosome fission factor. The sequence is that of Maestro heat-like repeat-containing protein family member 1 (mroh1) from Dictyostelium discoideum (Social amoeba).